Here is a 95-residue protein sequence, read N- to C-terminus: Protein TusB (95 aa).

The protein belongs to the DsrH/TusB family. In terms of assembly, heterohexamer, formed by a dimer of trimers. The hexameric TusBCD complex contains 2 copies each of TusB, TusC and TusD. The TusBCD complex interacts with TusE.

The protein resides in the cytoplasm. Functionally, part of a sulfur-relay system required for 2-thiolation of 5-methylaminomethyl-2-thiouridine (mnm(5)s(2)U) at tRNA wobble positions. The protein is Protein TusB of Pectobacterium carotovorum subsp. carotovorum (strain PC1).